Here is a 289-residue protein sequence, read N- to C-terminus: MKMEVLSVQNHIQGKFGVNKIKDWPSSGVASTAPHPLEEEEENAVDVNAALDADVVDGHPASVLHMRQHQALNTRSTVPMAPPVAGSGKQSAVAASFDVVNGSSAAYHHAYMTNVLASTAHHPGHGHGPGPSPMPASPLQSTAGARFGAADNMDDVSASAVRDLSQQLQFQLRDAKQRHLACTEVNLPADLTERIAAEIIRMSDREPCGERACTLFIEFESEPNNVRRIASFKVDPDTVSIFELYLTLKQDKSGWTSLLPQFIKNLTRSNTINISPDFTLTKNKLYSSE.

The tract at residues 119–142 (TAHHPGHGHGPGPSPMPASPLQST) is disordered.

It belongs to the DDIT4 family.

Its subcellular location is the cytoplasm. Functionally, inhibits cell growth by regulating the Tor pathway upstream of the Tsc1-Tsc2 complex and downstream of Akt1. Acts as a cell death activator during head development. The protein is Protein charybde (chrb) of Drosophila pseudoobscura pseudoobscura (Fruit fly).